A 753-amino-acid polypeptide reads, in one-letter code: MTIRNHTLGFPRVGLRRELKKAQESYWAGNATREDLLATGRELRARHWDQQKQAGIDLLPVGDFAWYDHVLTTSLLLGNVPARHQNSDGSVDIDTLFRIGRGRAPTGEPAAAAEMTKWFNTNYHYMVPEFVKGQQFKLTWTQLLDEVDEALALGHKVKPVLLGPVTYLWLGKVKGESFDRLSLLNDILPVYKQVLTELAKRGVEWVQIDEPALVLELPQEWLDAYKPAYDALQGQVKLLLTTYFEGVTPNLDTIAALPVQGLHVDLVHGKDDVAELHKRLPSDWLLSAGLVNGRNVWRADLTEKYAQIKDIVGKRDLWVASSCSLLHSPIDLSVETRLDAEVKSWFAFALQKCGELALLRDALNSGDTAKLEAWSAPIQARRHSTRVHNAAVEKRLAAITAQDSQRASPYAARAQAQRNRFNLPSWPTTTIGSFPQTTEIRGLRLDFKKGNLDANHYRTGIAEHIKQAIVEQERLGLDVLVHGEAERNDMVEYFGEHLDGFVFTQNGWVQSYGSRCVKPPVVIGDVSRPEPITVEWAKYAQSLTDKPVKGMLTGPVTILCWSFPREDVSRETIAKQIALALRDEVADLEAAGIGIIQIDEPALREGLPLRRSDWDAYLQWGVEAFRINAAVAKDDTQIHTHMCYCEFNDIMDSIAALDADVITIETSRSDMELLESFEEFEYPNEIGPGVYDIHSPNVPSVEWIEALLNKAAQRIPAERLWVNPDCGLKTRGWPETRAALANMVKAAQNLRQA.

5-methyltetrahydropteroyltri-L-glutamate-binding positions include Arg-17 to Lys-20 and Lys-117. Residues Ile-431–Ser-433 and Glu-484 each bind L-homocysteine. Residues Ile-431–Ser-433 and Glu-484 contribute to the L-methionine site. 5-methyltetrahydropteroyltri-L-glutamate-binding positions include Arg-515–Cys-516 and Trp-561. Asp-599 is a binding site for L-homocysteine. Asp-599 is an L-methionine binding site. Position 605 (Glu-605) interacts with 5-methyltetrahydropteroyltri-L-glutamate. Positions 641, 643, and 665 each coordinate Zn(2+). His-694 (proton donor) is an active-site residue. Residue Cys-726 coordinates Zn(2+).

Belongs to the vitamin-B12 independent methionine synthase family. Requires Zn(2+) as cofactor.

It carries out the reaction 5-methyltetrahydropteroyltri-L-glutamate + L-homocysteine = tetrahydropteroyltri-L-glutamate + L-methionine. It functions in the pathway amino-acid biosynthesis; L-methionine biosynthesis via de novo pathway; L-methionine from L-homocysteine (MetE route): step 1/1. Catalyzes the transfer of a methyl group from 5-methyltetrahydrofolate to homocysteine resulting in methionine formation. The protein is 5-methyltetrahydropteroyltriglutamate--homocysteine methyltransferase of Citrobacter koseri (strain ATCC BAA-895 / CDC 4225-83 / SGSC4696).